The primary structure comprises 124 residues: Large ribosomal subunit protein bL12 (124 aa).

The protein belongs to the bacterial ribosomal protein bL12 family. Homodimer. Part of the ribosomal stalk of the 50S ribosomal subunit. Forms a multimeric L10(L12)X complex, where L10 forms an elongated spine to which 2 to 4 L12 dimers bind in a sequential fashion. Binds GTP-bound translation factors.

Its function is as follows. Forms part of the ribosomal stalk which helps the ribosome interact with GTP-bound translation factors. Is thus essential for accurate translation. The polypeptide is Large ribosomal subunit protein bL12 (Bacteroides thetaiotaomicron (strain ATCC 29148 / DSM 2079 / JCM 5827 / CCUG 10774 / NCTC 10582 / VPI-5482 / E50)).